We begin with the raw amino-acid sequence, 263 residues long: Endonuclease 8 (263 aa).

Proline 2 (schiff-base intermediate with DNA) is an active-site residue. Glutamate 3 (proton donor) is an active-site residue. The Proton donor; for beta-elimination activity role is filled by lysine 53. DNA contacts are provided by glutamine 70, arginine 125, and asparagine 169. The FPG-type zinc-finger motif lies at 229 to 263 (KVFHREGKACERCGGVIERSTLSSRPFYGCPVCQK). Catalysis depends on arginine 253, which acts as the Proton donor; for delta-elimination activity.

This sequence belongs to the FPG family. Requires Zn(2+) as cofactor.

It carries out the reaction 2'-deoxyribonucleotide-(2'-deoxyribose 5'-phosphate)-2'-deoxyribonucleotide-DNA = a 3'-end 2'-deoxyribonucleotide-(2,3-dehydro-2,3-deoxyribose 5'-phosphate)-DNA + a 5'-end 5'-phospho-2'-deoxyribonucleoside-DNA + H(+). Involved in base excision repair of DNA damaged by oxidation or by mutagenic agents. Acts as a DNA glycosylase that recognizes and removes damaged bases. Has a preference for oxidized pyrimidines, such as thymine glycol, 5,6-dihydrouracil and 5,6-dihydrothymine. Has AP (apurinic/apyrimidinic) lyase activity and introduces nicks in the DNA strand. Cleaves the DNA backbone by beta-delta elimination to generate a single-strand break at the site of the removed base with both 3'- and 5'-phosphates. The polypeptide is Endonuclease 8 (Enterobacter sp. (strain 638)).